Reading from the N-terminus, the 945-residue chain is Leucine--tRNA ligase (945 aa).

The 'HIGH' region motif lies at 43 to 53 (PYPNGAVHIGH). Positions 638 to 642 (KMSKS) match the 'KMSKS' region motif. An ATP-binding site is contributed by K641.

The protein belongs to the class-I aminoacyl-tRNA synthetase family.

It is found in the cytoplasm. It catalyses the reaction tRNA(Leu) + L-leucine + ATP = L-leucyl-tRNA(Leu) + AMP + diphosphate. The sequence is that of Leucine--tRNA ligase from Pyrobaculum islandicum (strain DSM 4184 / JCM 9189 / GEO3).